The sequence spans 638 residues: 1-deoxy-D-xylulose-5-phosphate synthase (638 aa).

Thiamine diphosphate-binding positions include His74 and 115–117 (GHS). A Mg(2+)-binding site is contributed by Asp146. Thiamine diphosphate is bound by residues 147–148 (GA), Asn175, Tyr286, and Glu366. Position 175 (Asn175) interacts with Mg(2+).

The protein belongs to the transketolase family. DXPS subfamily. Homodimer. It depends on Mg(2+) as a cofactor. Thiamine diphosphate serves as cofactor.

It carries out the reaction D-glyceraldehyde 3-phosphate + pyruvate + H(+) = 1-deoxy-D-xylulose 5-phosphate + CO2. The protein operates within metabolic intermediate biosynthesis; 1-deoxy-D-xylulose 5-phosphate biosynthesis; 1-deoxy-D-xylulose 5-phosphate from D-glyceraldehyde 3-phosphate and pyruvate: step 1/1. Functionally, catalyzes the acyloin condensation reaction between C atoms 2 and 3 of pyruvate and glyceraldehyde 3-phosphate to yield 1-deoxy-D-xylulose-5-phosphate (DXP). The chain is 1-deoxy-D-xylulose-5-phosphate synthase from Syntrophomonas wolfei subsp. wolfei (strain DSM 2245B / Goettingen).